The chain runs to 171 residues: tRNA-specific adenosine deaminase (171 aa).

The CMP/dCMP-type deaminase domain maps to 6–133 (EEQTYFMQEA…ERLNHRVQVE (128 aa)). Residue His-57 coordinates Zn(2+). Glu-59 functions as the Proton donor in the catalytic mechanism. Zn(2+)-binding residues include Cys-87 and Cys-90.

The protein belongs to the cytidine and deoxycytidylate deaminase family. As to quaternary structure, homodimer. Requires Zn(2+) as cofactor.

It catalyses the reaction adenosine(34) in tRNA + H2O + H(+) = inosine(34) in tRNA + NH4(+). Catalyzes the deamination of adenosine to inosine at the wobble position 34 of tRNA(Arg2). The sequence is that of tRNA-specific adenosine deaminase from Streptococcus pyogenes serotype M3 (strain ATCC BAA-595 / MGAS315).